Consider the following 106-residue polypeptide: Large ribosomal subunit protein eL42 (106 aa).

Belongs to the eukaryotic ribosomal protein eL42 family.

The sequence is that of Large ribosomal subunit protein eL42 (RPL44) from Kluyveromyces lactis (strain ATCC 8585 / CBS 2359 / DSM 70799 / NBRC 1267 / NRRL Y-1140 / WM37) (Yeast).